Reading from the N-terminus, the 305-residue chain is Putative S-adenosyl-L-methionine-dependent methyltransferase MAB_3787 (305 aa).

S-adenosyl-L-methionine-binding positions include Asp-132 and 161 to 162 (DL).

The protein belongs to the UPF0677 family.

Exhibits S-adenosyl-L-methionine-dependent methyltransferase activity. The polypeptide is Putative S-adenosyl-L-methionine-dependent methyltransferase MAB_3787 (Mycobacteroides abscessus (strain ATCC 19977 / DSM 44196 / CCUG 20993 / CIP 104536 / JCM 13569 / NCTC 13031 / TMC 1543 / L948) (Mycobacterium abscessus)).